We begin with the raw amino-acid sequence, 816 residues long: Transcription factor qa-1f (816 aa).

A DNA-binding region (zn(2)-C6 fungal-type) is located at residues 76-103 (CDQCRAAREKCDGIQPACFPCVSQGRSC). The span at 184 to 202 (SGQAAQDPSEDGQSPSEDI) shows a compositional bias: polar residues. A disordered region spans residues 184–235 (SGQAAQDPSEDGQSPSEDINVQDAGAKTSDFPHAPHLTFSAPKSSTAETRTL).

The protein localises to the nucleus. Transcription activator; part of the qa gene cluster that mediates the catabolism of quinic acid (QA) and as such, allows the use of QA as a sole carbon source. Activates the expression of qa cluster genes by binding to a 16 base-pair consensus sequence 5'-GGRTAARYRYTTAYCC-3' present in the promoters of the target genes. Regulates its own expression. May regulate the expression of many other genes inclusing genes with products in 8 mutually connected metabolic pathways: (1) starch and sucrose metabolism; (2) glycolysis/glucanogenesis; (3) TCA Cycle; (4) butanoate metabolism; (5) pyruvate metabolism; (6) aromatic amino acid and QA metabolism; (7) valine, leucine, and isoleucine degradation; and (8) transport of sugars and amino acids. In Neurospora crassa (strain ATCC 24698 / 74-OR23-1A / CBS 708.71 / DSM 1257 / FGSC 987), this protein is Transcription factor qa-1f.